Reading from the N-terminus, the 102-residue chain is Small ribosomal subunit protein uS10 (102 aa).

The protein belongs to the universal ribosomal protein uS10 family. In terms of assembly, part of the 30S ribosomal subunit.

In terms of biological role, involved in the binding of tRNA to the ribosomes. The sequence is that of Small ribosomal subunit protein uS10 from Methylobacillus flagellatus (strain ATCC 51484 / DSM 6875 / VKM B-1610 / KT).